Consider the following 58-residue polypeptide: U8-ctenitoxin-Pk1a (58 aa).

5 cysteine pairs are disulfide-bonded: C2/C16, C9/C22, C15/C40, C24/C38, and C48/C55.

In terms of tissue distribution, expressed by the venom gland.

The protein resides in the secreted. Its function is as follows. No toxic effects on mice at dose levels of 5 ug per mouse. May be toxic to insects. In Phoneutria keyserlingi (Brazilian wandering spider), this protein is U8-ctenitoxin-Pk1a.